The sequence spans 206 residues: Protein GrpE (206 aa).

The span at Met1 to Ala15 shows a compositional bias: polar residues. Residues Met1–Glu38 form a disordered region.

The protein belongs to the GrpE family. As to quaternary structure, homodimer.

The protein localises to the cytoplasm. In terms of biological role, participates actively in the response to hyperosmotic and heat shock by preventing the aggregation of stress-denatured proteins, in association with DnaK and GrpE. It is the nucleotide exchange factor for DnaK and may function as a thermosensor. Unfolded proteins bind initially to DnaJ; upon interaction with the DnaJ-bound protein, DnaK hydrolyzes its bound ATP, resulting in the formation of a stable complex. GrpE releases ADP from DnaK; ATP binding to DnaK triggers the release of the substrate protein, thus completing the reaction cycle. Several rounds of ATP-dependent interactions between DnaJ, DnaK and GrpE are required for fully efficient folding. The sequence is that of Protein GrpE from Rhodopseudomonas palustris (strain BisB5).